We begin with the raw amino-acid sequence, 62 residues long: Large ribosomal subunit protein uL30 (62 aa).

Belongs to the universal ribosomal protein uL30 family. As to quaternary structure, part of the 50S ribosomal subunit.

This Geobacillus kaustophilus (strain HTA426) protein is Large ribosomal subunit protein uL30.